The chain runs to 270 residues: Putative phosphoenolpyruvate synthase regulatory protein (270 aa).

An ADP-binding site is contributed by 150–157 (GVSRCGKT).

It belongs to the pyruvate, phosphate/water dikinase regulatory protein family. PSRP subfamily.

The enzyme catalyses [pyruvate, water dikinase] + ADP = [pyruvate, water dikinase]-phosphate + AMP + H(+). It catalyses the reaction [pyruvate, water dikinase]-phosphate + phosphate + H(+) = [pyruvate, water dikinase] + diphosphate. In terms of biological role, bifunctional serine/threonine kinase and phosphorylase involved in the regulation of the phosphoenolpyruvate synthase (PEPS) by catalyzing its phosphorylation/dephosphorylation. The polypeptide is Putative phosphoenolpyruvate synthase regulatory protein (Shewanella sp. (strain ANA-3)).